Consider the following 339-residue polypeptide: MEQAALKSSVRKEMALKTTSPVYEEFLAVTTAQNGFSVDDFSVDDLLDLSNDDVFADEETDLKAQHEMVRVSSEEPNDDGDALRRSSDFSGCDDFGSLPTSELSLPADDLANLEWLSHFVEDSFTEYSGPNLTGTPTEKPAWLTGDRKHPVTAVTEETCFKSPVPAKARSKRNRNGLKVWSLGSSSSSGPSSSGSTSSSSSGPSSPWFSGAELLEPVVTSERPPFPKKHKKRSAESVFSGELQQLQPQRKCSHCGVQKTPQWRAGPMGAKTLCNACGVRYKSGRLLPEYRPACSPTFSSELHSNHHRKVIEMRRKKEPTSDNETGLNQLVQSPQAVPSF.

Disordered regions lie at residues 68 to 88, 126 to 145, 163 to 206, and 221 to 242; these read MVRV…RSSD, EYSG…WLTG, PVPA…PSSP, and ERPP…SGEL. Residues 126–136 show a composition bias toward polar residues; it reads EYSGPNLTGTP. The Nuclear localization signal signature appears at 167–174; that stretch reads KARSKRNR. Positions 181-206 are enriched in low complexity; it reads SLGSSSSSGPSSSGSTSSSSSGPSSP. The GATA-type zinc-finger motif lies at 245-299; that stretch reads LQPQRKCSHCGVQKTPQWRAGPMGAKTLCNACGVRYKSGRLLPEYRPACSPTFSS. Residues 314–339 form a disordered region; it reads RKKEPTSDNETGLNQLVQSPQAVPSF. Residues 321-339 are compositionally biased toward polar residues; sequence DNETGLNQLVQSPQAVPSF.

It belongs to the type IV zinc-finger family. Class A subfamily.

The protein localises to the nucleus. Functionally, transcriptional activator that specifically binds 5'-GATA-3' or 5'-GAT-3' motifs within gene promoters. May be involved in the regulation of some light-responsive genes. The chain is GATA transcription factor 5 (GATA5) from Arabidopsis thaliana (Mouse-ear cress).